The following is a 98-amino-acid chain: NADH-ubiquinone oxidoreductase chain 4L (98 aa).

Helical transmembrane passes span 1-21 (MVLI…GVLI), 36-56 (MMLS…MFSI), and 61-81 (LILL…LVSI).

The protein belongs to the complex I subunit 4L family.

It is found in the mitochondrion membrane. The catalysed reaction is a ubiquinone + NADH + 5 H(+)(in) = a ubiquinol + NAD(+) + 4 H(+)(out). Its function is as follows. Core subunit of the mitochondrial membrane respiratory chain NADH dehydrogenase (Complex I) which catalyzes electron transfer from NADH through the respiratory chain, using ubiquinone as an electron acceptor. Part of the enzyme membrane arm which is embedded in the lipid bilayer and involved in proton translocation. This Didelphis virginiana (North American opossum) protein is NADH-ubiquinone oxidoreductase chain 4L (MT-ND4L).